The following is a 382-amino-acid chain: MAKDKEKQSDDKLVLTEWQKRNIEFLKKKKQQAEEEKKLKEKLLSDKKAQQQAQNASEAVELKTDEKTDSQEIESETTSKPKKTKKVRQPKEKSATQIAFQKSLPVLLGALLLMAVSIFMITPYSKKKEFSVRGNHQTNLDELIKASKVKASDYWLTLLISPGQYERPILRTIPWVKSVHLSYHFPNHFLFNVIEFEIIAYAQVENGFQPILENGKRVDKVRASELPKSFLILNLKDEKAIQQLVKQLTTLPKKLVKNIKSVSLANSKTTADLLLIEMHDGNVVRVPQSQLTLKLPYYQKLKKNLENDSIVDMEVGIYTTTQEIENQPEVPLTPEQNAADKEGDKPGEHQEQTDNDSETPANQSSPQQTPPSPETVLEQAHG.

The Cytoplasmic portion of the chain corresponds to 1 to 103 (MAKDKEKQSD…SATQIAFQKS (103 aa)). Basic and acidic residues-rich tracts occupy residues 36–49 (EKKLKEKLLSDKKA) and 60–70 (VELKTDEKTDS). Positions 36 to 92 (EKKLKEKLLSDKKAQQQAQNASEAVELKTDEKTDSQEIESETTSKPKKTKKVRQPKE) are disordered. A helical membrane pass occupies residues 104–124 (LPVLLGALLLMAVSIFMITPY). The region spanning 125-196 (SKKKEFSVRG…NHFLFNVIEF (72 aa)) is the POTRA domain. Residues 125-382 (SKKKEFSVRG…PETVLEQAHG (258 aa)) lie on the Extracellular side of the membrane. The interval 322–382 (QEIENQPEVP…PETVLEQAHG (61 aa)) is disordered. Over residues 338-352 (AADKEGDKPGEHQEQ) the composition is skewed to basic and acidic residues.

Belongs to the FtsQ/DivIB family. DivIB subfamily.

It localises to the cell membrane. Functionally, cell division protein that may be involved in stabilizing or promoting the assembly of the division complex. The sequence is that of Cell division protein DivIB from Streptococcus pyogenes serotype M2 (strain MGAS10270).